Here is a 55-residue protein sequence, read N- to C-terminus: uncharacterized protein (55 aa).

This is an uncharacterized protein from Dictyostelium discoideum (Social amoeba).